The sequence spans 261 residues: Ribosome biogenesis protein nsa2 (261 aa).

2 stretches are compositionally biased toward basic and acidic residues: residues 1–36 (MPQN…HKQS) and 66–82 (KQHE…EKDP). Disordered stretches follow at residues 1–44 (MPQN…NLRG) and 64–97 (AIKQ…SNPT). The Nuclear localization signal motif lies at 15–22 (GKRLDTEE).

It belongs to the eukaryotic ribosomal protein eS8 family. Ribosome biogenesis protein NSA2 subfamily. Component of the pre-66S ribosomal particle. Interacts with nop7 and rrp1. Interacts with rsa4 (via WD repeats).

Its subcellular location is the nucleus. The protein resides in the nucleolus. In terms of biological role, involved in the biogenesis of the 60S ribosomal subunit. May play a part in the quality control of pre-60S particles. The chain is Ribosome biogenesis protein nsa2 (rbg-52) from Neurospora crassa (strain ATCC 24698 / 74-OR23-1A / CBS 708.71 / DSM 1257 / FGSC 987).